We begin with the raw amino-acid sequence, 469 residues long: 3-isopropylmalate dehydratase large subunit (469 aa).

Residues Cys350, Cys410, and Cys413 each coordinate [4Fe-4S] cluster.

This sequence belongs to the aconitase/IPM isomerase family. LeuC type 1 subfamily. Heterodimer of LeuC and LeuD. The cofactor is [4Fe-4S] cluster.

It catalyses the reaction (2R,3S)-3-isopropylmalate = (2S)-2-isopropylmalate. It participates in amino-acid biosynthesis; L-leucine biosynthesis; L-leucine from 3-methyl-2-oxobutanoate: step 2/4. Catalyzes the isomerization between 2-isopropylmalate and 3-isopropylmalate, via the formation of 2-isopropylmaleate. This is 3-isopropylmalate dehydratase large subunit from Sinorhizobium fredii (strain NBRC 101917 / NGR234).